The sequence spans 456 residues: Alcohol acyltransferase 1 (456 aa).

Residues His-166 and Asp-382 each act as proton acceptor in the active site.

It belongs to the plant acyltransferase family. In terms of tissue distribution, expressed in fruit.

It carries out the reaction 3-(methylsulfanyl)propanoyl-CoA + butan-1-ol = butyl 3-(methylsulfanyl)propanoate + CoA. The catalysed reaction is ethanol + benzoyl-CoA = ethyl benzoate + CoA. The enzyme catalyses butan-1-ol + benzoyl-CoA = butyl benzoate + CoA. It catalyses the reaction 2-(methylsulfanyl)acetyl-CoA + butan-1-ol = butyl 2-(methylsulfanyl)acetate + CoA. Functionally, involved in the biosynthesis of volatile esters which confer kiwifruit flavor. Alcohol acyl transferase that can use a wide range of alcohols as substrate to produce esters. Exhibits benzoyl-CoA:alcohol O-acyltransferase activity. The protein is Alcohol acyltransferase 1 of Actinidia deliciosa (Kiwi).